A 314-amino-acid chain; its full sequence is Thymidylate synthase (314 aa).

Residues Arg-21 and 176–177 (RR) contribute to the dUMP site. Catalysis depends on Cys-196, which acts as the Nucleophile. DUMP is bound by residues 216–219 (RSAD), Asn-227, and 257–259 (HLY). Asp-219 contributes to the (6R)-5,10-methylene-5,6,7,8-tetrahydrofolate binding site. Ser-313 provides a ligand contact to (6R)-5,10-methylene-5,6,7,8-tetrahydrofolate.

It belongs to the thymidylate synthase family. Bacterial-type ThyA subfamily. As to quaternary structure, homodimer.

Its subcellular location is the cytoplasm. The enzyme catalyses dUMP + (6R)-5,10-methylene-5,6,7,8-tetrahydrofolate = 7,8-dihydrofolate + dTMP. Its pathway is pyrimidine metabolism; dTTP biosynthesis. Its function is as follows. Catalyzes the reductive methylation of 2'-deoxyuridine-5'-monophosphate (dUMP) to 2'-deoxythymidine-5'-monophosphate (dTMP) while utilizing 5,10-methylenetetrahydrofolate (mTHF) as the methyl donor and reductant in the reaction, yielding dihydrofolate (DHF) as a by-product. This enzymatic reaction provides an intracellular de novo source of dTMP, an essential precursor for DNA biosynthesis. This is Thymidylate synthase from Listeria monocytogenes serotype 4b (strain CLIP80459).